The chain runs to 354 residues: UPF0283 protein YcjF (354 aa).

3 helical membrane-spanning segments follow: residues 71 to 91 (MVTVGIALFGVSVIAQSVQWV), 101 to 121 (IALGATTAGGLIVLAGVGSVV), and 214 to 234 (ESALMIAVSPLALVDMAFIAW).

Belongs to the UPF0283 family.

It localises to the cell inner membrane. In Yersinia enterocolitica, this protein is UPF0283 protein YcjF (ycjF).